A 375-amino-acid chain; its full sequence is cAMP-dependent protein kinase regulatory subunit (375 aa).

The tract at residues 28–142 (RFCADYFNER…SLYKSVSHNF (115 aa)) is dimerization and phosphorylation. Positions 41–50 (REEADDDGPR) are enriched in basic and acidic residues. A disordered region spans residues 41 to 102 (REEADDDGPR…EPAAPFTRRT (62 aa)). The span at 64–82 (GSSSRSTDGSLFRSSFADT) shows a compositional bias: polar residues. The span at 83 to 97 (SSEGPGSASSEPAAP) shows a compositional bias: low complexity. Ser-103 bears the Phosphoserine mark. Residues 143–258 (LFGN…FLKE), Glu-208, Arg-217, 261–375 (ILSD…DPTK), Glu-328, and Arg-337 each bind 3',5'-cyclic AMP.

The protein belongs to the cAMP-dependent kinase regulatory chain family. Tetramer, composed of 2 regulatory (R) and 2 catalytic (C) subunits. In the presence of cAMP it dissociates into 2 active monomeric C subunits and an R dimer.

In Yarrowia lipolytica (strain CLIB 122 / E 150) (Yeast), this protein is cAMP-dependent protein kinase regulatory subunit (PKAR).